Reading from the N-terminus, the 78-residue chain is Translational regulator CsrA (78 aa).

The protein belongs to the CsrA/RsmA family. In terms of assembly, homodimer; the beta-strands of each monomer intercalate to form a hydrophobic core, while the alpha-helices form wings that extend away from the core.

The protein localises to the cytoplasm. Its function is as follows. A translational regulator that binds mRNA to regulate translation initiation and/or mRNA stability. Usually binds in the 5'-UTR at or near the Shine-Dalgarno sequence preventing ribosome-binding, thus repressing translation. Its main target seems to be the major flagellin gene, while its function is anatagonized by FliW. The polypeptide is Translational regulator CsrA (Nitratidesulfovibrio vulgaris (strain ATCC 29579 / DSM 644 / CCUG 34227 / NCIMB 8303 / VKM B-1760 / Hildenborough) (Desulfovibrio vulgaris)).